A 281-amino-acid polypeptide reads, in one-letter code: 3-methyl-2-oxobutanoate hydroxymethyltransferase (281 aa).

Mg(2+)-binding residues include aspartate 49 and aspartate 88. 3-methyl-2-oxobutanoate contacts are provided by residues aspartate 49–serine 50, aspartate 88, and lysine 118. Residue glutamate 120 coordinates Mg(2+). Glutamate 186 (proton acceptor) is an active-site residue.

Belongs to the PanB family. As to quaternary structure, homodecamer; pentamer of dimers. Requires Mg(2+) as cofactor.

It is found in the cytoplasm. The catalysed reaction is 3-methyl-2-oxobutanoate + (6R)-5,10-methylene-5,6,7,8-tetrahydrofolate + H2O = 2-dehydropantoate + (6S)-5,6,7,8-tetrahydrofolate. The protein operates within cofactor biosynthesis; (R)-pantothenate biosynthesis; (R)-pantoate from 3-methyl-2-oxobutanoate: step 1/2. Its function is as follows. Catalyzes the reversible reaction in which hydroxymethyl group from 5,10-methylenetetrahydrofolate is transferred onto alpha-ketoisovalerate to form ketopantoate. The sequence is that of 3-methyl-2-oxobutanoate hydroxymethyltransferase from Chelativorans sp. (strain BNC1).